A 701-amino-acid chain; its full sequence is Putative pectinesterase/pectinesterase inhibitor 43 (701 aa).

The N-terminal stretch at 1 to 22 (MNKYVLLGVTALIMAMVICVEA) is a signal peptide. The interval 42–195 (MITKTTVSII…QHLTSNGLAI (154 aa)) is pectinesterase inhibitor 43. Composition is skewed to low complexity over residues 221 to 256 (GILG…VDSS) and 263 to 275 (SSSE…SSNN). The disordered stretch occupies residues 221-351 (GILGSGSSRD…DPLRKLNPLN (131 aa)). An N-linked (GlcNAc...) asparagine glycan is attached at Asn267. Composition is skewed to polar residues over residues 276–287 (RPLDSSKNQQME) and 313–338 (QKST…SSEN). The pectinesterase 43 stretch occupies residues 391–688 (NVVVAKDGSG…FAPGNFLRGN (298 aa)). Substrate is bound by residues Thr467 and Gln497. Asp520 (proton donor; for pectinesterase activity) is an active-site residue. Cys534 and Cys554 are joined by a disulfide. Catalysis depends on Asp541, which acts as the Nucleophile; for pectinesterase activity. Substrate contacts are provided by Arg609 and Trp611. Asn637 is a glycosylation site (N-linked (GlcNAc...) asparagine).

In the N-terminal section; belongs to the PMEI family. The protein in the C-terminal section; belongs to the pectinesterase family. As to expression, expressed in flower buds.

It localises to the secreted. The protein localises to the cell wall. The catalysed reaction is [(1-&gt;4)-alpha-D-galacturonosyl methyl ester](n) + n H2O = [(1-&gt;4)-alpha-D-galacturonosyl](n) + n methanol + n H(+). It functions in the pathway glycan metabolism; pectin degradation; 2-dehydro-3-deoxy-D-gluconate from pectin: step 1/5. Its function is as follows. Acts in the modification of cell walls via demethylesterification of cell wall pectin. This Arabidopsis thaliana (Mouse-ear cress) protein is Putative pectinesterase/pectinesterase inhibitor 43 (PME43).